We begin with the raw amino-acid sequence, 274 residues long: Diaminopimelate epimerase (274 aa).

2 residues coordinate substrate: Asn-11 and Asn-62. The Proton donor role is filled by Cys-71. Substrate-binding positions include 72-73 (GN), Asn-157, Asn-190, and 208-209 (ER). The active-site Proton acceptor is Cys-217. 218–219 (GT) contributes to the substrate binding site.

This sequence belongs to the diaminopimelate epimerase family. In terms of assembly, homodimer.

The protein resides in the cytoplasm. The catalysed reaction is (2S,6S)-2,6-diaminopimelate = meso-2,6-diaminopimelate. The protein operates within amino-acid biosynthesis; L-lysine biosynthesis via DAP pathway; DL-2,6-diaminopimelate from LL-2,6-diaminopimelate: step 1/1. Its function is as follows. Catalyzes the stereoinversion of LL-2,6-diaminopimelate (L,L-DAP) to meso-diaminopimelate (meso-DAP), a precursor of L-lysine and an essential component of the bacterial peptidoglycan. This is Diaminopimelate epimerase from Elusimicrobium minutum (strain Pei191).